The sequence spans 615 residues: Zinc metalloproteinase-disintegrin-like (615 aa).

The first 20 residues, 1-20, serve as a signal peptide directing secretion; that stretch reads MIQALLVTICLVGFPHQGSS. The propeptide occupies 21–195; sequence IILESGNVKD…KMNFQSANNP (175 aa). The region spanning 204–400 is the Peptidase M12B domain; the sequence is KYIKLAVVVD…DLPQCILNKP (197 aa). Disulfide bonds link cysteine 315-cysteine 395, cysteine 355-cysteine 379, and cysteine 357-cysteine 362. Histidine 340 is a binding site for Zn(2+). The active site involves glutamate 341. Histidine 344 and histidine 350 together coordinate Zn(2+). Residues 408–494 enclose the Disintegrin domain; that stretch reads PAVCGNNFVE…DCPMDGLQRN (87 aa). The Ca(2+) site is built by valine 410, asparagine 413, phenylalanine 415, glutamate 417, and aspartate 423. 14 cysteine pairs are disulfide-bonded: cysteine 411–cysteine 440, cysteine 422–cysteine 435, cysteine 424–cysteine 430, cysteine 434–cysteine 457, cysteine 448–cysteine 454, cysteine 453–cysteine 479, cysteine 466–cysteine 486, cysteine 473–cysteine 505, cysteine 498–cysteine 510, cysteine 517–cysteine 567, cysteine 532–cysteine 576, cysteine 545–cysteine 555, cysteine 562–cysteine 602, and cysteine 596–cysteine 608. A D/ECD-tripeptide motif is present at residues 472–474; that stretch reads DCD.

It belongs to the venom metalloproteinase (M12B) family. P-III subfamily. P-IIIa sub-subfamily. In terms of assembly, monomer. It depends on Zn(2+) as a cofactor. Expressed by the venom gland.

The protein localises to the secreted. Functionally, snake venom zinc metalloprotease that may induce platelet aggregation. This Cerberus rynchops (Dog-faced water snake) protein is Zinc metalloproteinase-disintegrin-like.